We begin with the raw amino-acid sequence, 360 residues long: Phospho-N-acetylmuramoyl-pentapeptide-transferase (360 aa).

11 helical membrane-spanning segments follow: residues 2-22 (LVWV…FQYL), 26-46 (AILG…VMIR), 73-93 (TMGG…WADL), 97-117 (YVLI…VDDW), 134-154 (YFWQ…TAHL), 168-188 (ITLA…VGGS), 199-219 (GLAI…AYLS), 236-256 (TGEL…FLWF), 263-283 (VFMG…VAVI), 288-308 (LVFF…ILQV), and 339-359 (IVRF…TLKI).

The protein belongs to the glycosyltransferase 4 family. MraY subfamily. Mg(2+) serves as cofactor.

It is found in the cell inner membrane. The catalysed reaction is UDP-N-acetyl-alpha-D-muramoyl-L-alanyl-gamma-D-glutamyl-meso-2,6-diaminopimeloyl-D-alanyl-D-alanine + di-trans,octa-cis-undecaprenyl phosphate = di-trans,octa-cis-undecaprenyl diphospho-N-acetyl-alpha-D-muramoyl-L-alanyl-D-glutamyl-meso-2,6-diaminopimeloyl-D-alanyl-D-alanine + UMP. It functions in the pathway cell wall biogenesis; peptidoglycan biosynthesis. Functionally, catalyzes the initial step of the lipid cycle reactions in the biosynthesis of the cell wall peptidoglycan: transfers peptidoglycan precursor phospho-MurNAc-pentapeptide from UDP-MurNAc-pentapeptide onto the lipid carrier undecaprenyl phosphate, yielding undecaprenyl-pyrophosphoryl-MurNAc-pentapeptide, known as lipid I. The protein is Phospho-N-acetylmuramoyl-pentapeptide-transferase of Hahella chejuensis (strain KCTC 2396).